The sequence spans 139 residues: Small ribosomal subunit protein bS6 (139 aa).

Residues K114–E133 show a composition bias toward basic and acidic residues. The segment at K114 to E139 is disordered.

Belongs to the bacterial ribosomal protein bS6 family.

In terms of biological role, binds together with bS18 to 16S ribosomal RNA. The protein is Small ribosomal subunit protein bS6 of Campylobacter concisus (strain 13826).